A 79-amino-acid chain; its full sequence is MKFNNKKNTFKKRRKVCFFTENKVTKIDFKDIELLQRFITDRGRILSRRVTNTSARWQRQLAIAIKRARHMALIPFIQQ.

This sequence belongs to the bacterial ribosomal protein bS18 family. As to quaternary structure, part of the 30S ribosomal subunit. Forms a tight heterodimer with protein bS6.

Binds as a heterodimer with protein bS6 to the central domain of the 16S rRNA, where it helps stabilize the platform of the 30S subunit. In Aster yellows witches'-broom phytoplasma (strain AYWB), this protein is Small ribosomal subunit protein bS18.